We begin with the raw amino-acid sequence, 98 residues long: Aspartyl/glutamyl-tRNA(Asn/Gln) amidotransferase subunit C (98 aa).

Belongs to the GatC family. Heterotrimer of A, B and C subunits.

It carries out the reaction L-glutamyl-tRNA(Gln) + L-glutamine + ATP + H2O = L-glutaminyl-tRNA(Gln) + L-glutamate + ADP + phosphate + H(+). The enzyme catalyses L-aspartyl-tRNA(Asn) + L-glutamine + ATP + H2O = L-asparaginyl-tRNA(Asn) + L-glutamate + ADP + phosphate + 2 H(+). Functionally, allows the formation of correctly charged Asn-tRNA(Asn) or Gln-tRNA(Gln) through the transamidation of misacylated Asp-tRNA(Asn) or Glu-tRNA(Gln) in organisms which lack either or both of asparaginyl-tRNA or glutaminyl-tRNA synthetases. The reaction takes place in the presence of glutamine and ATP through an activated phospho-Asp-tRNA(Asn) or phospho-Glu-tRNA(Gln). The sequence is that of Aspartyl/glutamyl-tRNA(Asn/Gln) amidotransferase subunit C from Beutenbergia cavernae (strain ATCC BAA-8 / DSM 12333 / CCUG 43141 / JCM 11478 / NBRC 16432 / NCIMB 13614 / HKI 0122).